Consider the following 90-residue polypeptide: MAVKIRLTRMGSKKKPFYRINVADSRAPRDGRFIETVGTYNPLVAENQITIKEDRVLEWLSKGAQPSDTVRNILSKAGVMAKFHDQKFSK.

The protein belongs to the bacterial ribosomal protein bS16 family.

This is Small ribosomal subunit protein bS16 from Streptococcus pyogenes serotype M4 (strain MGAS10750).